A 115-amino-acid chain; its full sequence is Large ribosomal subunit protein eL30 (115 aa).

It belongs to the eukaryotic ribosomal protein eL30 family. As to quaternary structure, component of the large ribosomal subunit.

The protein localises to the cytoplasm. Functionally, component of the large ribosomal subunit. The ribosome is a large ribonucleoprotein complex responsible for the synthesis of proteins in the cell. The sequence is that of Large ribosomal subunit protein eL30 (RPL30) from Gallus gallus (Chicken).